Consider the following 874-residue polypeptide: Alanine--tRNA ligase (874 aa).

H564, H568, C665, and H669 together coordinate Zn(2+).

This sequence belongs to the class-II aminoacyl-tRNA synthetase family. Zn(2+) is required as a cofactor.

It is found in the cytoplasm. The enzyme catalyses tRNA(Ala) + L-alanine + ATP = L-alanyl-tRNA(Ala) + AMP + diphosphate. Functionally, catalyzes the attachment of alanine to tRNA(Ala) in a two-step reaction: alanine is first activated by ATP to form Ala-AMP and then transferred to the acceptor end of tRNA(Ala). Also edits incorrectly charged Ser-tRNA(Ala) and Gly-tRNA(Ala) via its editing domain. The protein is Alanine--tRNA ligase of Burkholderia thailandensis (strain ATCC 700388 / DSM 13276 / CCUG 48851 / CIP 106301 / E264).